Here is a 467-residue protein sequence, read N- to C-terminus: Na(+)-translocating NADH-quinone reductase subunit A (467 aa).

This sequence belongs to the NqrA family. In terms of assembly, composed of six subunits; NqrA, NqrB, NqrC, NqrD, NqrE and NqrF.

It carries out the reaction a ubiquinone + n Na(+)(in) + NADH + H(+) = a ubiquinol + n Na(+)(out) + NAD(+). In terms of biological role, NQR complex catalyzes the reduction of ubiquinone-1 to ubiquinol by two successive reactions, coupled with the transport of Na(+) ions from the cytoplasm to the periplasm. NqrA to NqrE are probably involved in the second step, the conversion of ubisemiquinone to ubiquinol. This chain is Na(+)-translocating NADH-quinone reductase subunit A, found in Chlamydia pneumoniae (Chlamydophila pneumoniae).